Here is a 407-residue protein sequence, read N- to C-terminus: 41 kDa spicule matrix protein (407 aa).

Residues 1–17 (MKGVLFIVASLVAFATG) form the signal peptide. The C-type lectin domain occupies 29–160 (SGQSCYRYFN…PGRAPVMKRQ (132 aa)). Disordered regions lie at residues 143–176 (PQNP…IPQG) and 204–407 (IGQQ…DALA). Residues 223–369 (NQPGMGGRQP…MGGRQPGMGG (147 aa)) show a composition bias toward gly residues. Residues 370–398 (QQPNNPNNPNNPNNPNNPNNPNPRFNRPR) are compositionally biased toward low complexity.

The protein belongs to the SM50 family. As to expression, expressed specifically in the micromere/primary mesenchyme cells (PMC) lineage.

The protein localises to the secreted. In terms of biological role, major matrix protein of the sea urchin embryo spicule which directs crystal growth in certain orientations and inhibit growth in others. The sequence is that of 41 kDa spicule matrix protein from Hemicentrotus pulcherrimus (Sea urchin).